Here is a 1479-residue protein sequence, read N- to C-terminus: Chromosome partition protein MukB (1479 aa).

G34–S41 contacts ATP. 5 coiled-coil regions span residues L337–Q418, Q511–W604, R780–K810, E847–G1116, and D1206–V1265. Positions P666 to R783 are flexible hinge.

It belongs to the SMC family. MukB subfamily. In terms of assembly, homodimerization via its hinge domain. Binds to DNA via its C-terminal region. Interacts, and probably forms a ternary complex, with MukE and MukF via its C-terminal region. The complex formation is stimulated by calcium or magnesium. Interacts with tubulin-related protein FtsZ.

The protein resides in the cytoplasm. It is found in the nucleoid. Plays a central role in chromosome condensation, segregation and cell cycle progression. Functions as a homodimer, which is essential for chromosome partition. Involved in negative DNA supercoiling in vivo, and by this means organize and compact chromosomes. May achieve or facilitate chromosome segregation by condensation DNA from both sides of a centrally located replisome during cell division. The polypeptide is Chromosome partition protein MukB (Pectobacterium atrosepticum (strain SCRI 1043 / ATCC BAA-672) (Erwinia carotovora subsp. atroseptica)).